The following is a 277-amino-acid chain: MEADKKTTAQTESNRDLSEQIKKVTKDVHVRAESTELMLSFQRGQVTLQQYKLLLCSLYEIYLALEEEMDRNCDHPSVAPIYFPAELARLATIEKDLEFFFGPDWREKIVVPAATERYCHRIRQIGQENPEYLIAHAYTRYLGDLSGGQVLGRIAQKSMKLGGSEGLSFFAFPGVSSPNLFKRLYRSRMNSVELTEEQRSAVLQEALGAFEFNIQVFEDLQKMLNVTENEPGVGTPRSRPATTLQVGGSMIQTNPLFRMVLGLCLALATVSIGLYAL.

H29 provides a ligand contact to heme b.

This sequence belongs to the heme oxygenase family.

It localises to the microsome. It is found in the endoplasmic reticulum. It catalyses the reaction heme b + 3 reduced [NADPH--hemoprotein reductase] + 3 O2 = biliverdin IXalpha + CO + Fe(2+) + 3 oxidized [NADPH--hemoprotein reductase] + 3 H2O + H(+). Heme oxygenase cleaves the heme ring at the alpha methene bridge to form biliverdin. Biliverdin is subsequently converted to bilirubin by biliverdin reductase. Under physiological conditions, the activity of heme oxygenase is highest in the spleen, where senescent erythrocytes are sequestrated and destroyed. This Takifugu rubripes (Japanese pufferfish) protein is Heme oxygenase (hmox).